The following is a 441-amino-acid chain: Glutamyl-tRNA reductase (441 aa).

Substrate is bound by residues 58–61 (TCNR), serine 116, 121–123 (EPD), and glutamine 127. Cysteine 59 (nucleophile) is an active-site residue. Residue 195–200 (GAGMAG) participates in NADP(+) binding.

The protein belongs to the glutamyl-tRNA reductase family. Homodimer.

It carries out the reaction (S)-4-amino-5-oxopentanoate + tRNA(Glu) + NADP(+) = L-glutamyl-tRNA(Glu) + NADPH + H(+). Its pathway is porphyrin-containing compound metabolism; protoporphyrin-IX biosynthesis; 5-aminolevulinate from L-glutamyl-tRNA(Glu): step 1/2. Catalyzes the NADPH-dependent reduction of glutamyl-tRNA(Glu) to glutamate 1-semialdehyde (GSA). The sequence is that of Glutamyl-tRNA reductase from Ignicoccus hospitalis (strain KIN4/I / DSM 18386 / JCM 14125).